The following is a 270-amino-acid chain: MAMLDPETLRTFVSVAETGSFSRAAEKLYKTTATISYRIKLLEDNTGVALFSRTTRSVLLTPAGMHLLAQAREWLGWIDSMPGELQQINDGVERQVNIVVNNLMYDPQAIARLLAWLTQRYPFTQFHFSRQIYMGVWDTLLHDDFSLAIGVTGTEPLAENMAVYPLGEVTWLFVMSPHHPLSQQTDPLSEAQLRRYPAVNIEDSARRLTKRVAWRLPGQKEIVVPDIETKVAAHLAGVGIGFLPEPLCLPLIAQGKLIADTFRPCVPLRH.

An HTH lysR-type domain is found at 4–61; it reads LDPETLRTFVSVAETGSFSRAAEKLYKTTATISYRIKLLEDNTGVALFSRTTRSVLLT. The H-T-H motif DNA-binding region spans 21 to 40; the sequence is FSRAAEKLYKTTATISYRIK.

It belongs to the LysR transcriptional regulatory family.

In terms of biological role, positive regulator essential for the expression of allD operon. Binds to the allD promoter. This is HTH-type transcriptional activator AllS (allS) from Klebsiella pneumoniae.